The following is a 73-amino-acid chain: Large ribosomal subunit protein bL31 (73 aa).

The protein belongs to the bacterial ribosomal protein bL31 family. Type A subfamily. Part of the 50S ribosomal subunit.

Its function is as follows. Binds the 23S rRNA. The sequence is that of Large ribosomal subunit protein bL31 from Cereibacter sphaeroides (strain ATCC 17029 / ATH 2.4.9) (Rhodobacter sphaeroides).